The following is a 251-amino-acid chain: 2-amino-5-chloromuconate deaminase (251 aa).

As to quaternary structure, monomer.

It carries out the reaction (2Z,4E)-2-aminomuconate + H2O = (2Z,4E)-2-hydroxyhexa-2,4-dienedioate + NH4(+). Its pathway is xenobiotic degradation; 4-chloronitrobenzene degradation. It functions in the pathway xenobiotic degradation; nitrobenzene degradation. With respect to regulation, cysteine residue modifying agents such as p-chloromercuribenzoate and the SH-binding metals Zn(2+), Ni(2+) and Cu(2+) completely inhibit deaminase activity, whereas Ca(2+), Mg(2+) and the histidine residue-modifying agent diethyl pyrocarbonate inhibit the activity by 23 to 50%. Its function is as follows. Involved in the biodegradation of xenobiotic compounds, such as nitrobenzene and 4-chloronitrobenzene (4-CNB). CnbZ preferentially catalyzes the deamination of 2-amino-5-chloromuconate (2A5CM) to yield 2-hydroxy-5-chloromuconate (2H5CM). Also able to catalyze the deamination of 2-aminomuconate to yield 2-hydroxymuconate, which spontaneously converts into its keto form, 2-oxalocrotonate. The sequence is that of 2-amino-5-chloromuconate deaminase from Comamonas testosteroni (Pseudomonas testosteroni).